Here is a 282-residue protein sequence, read N- to C-terminus: Biotin synthase (282 aa).

The Radical SAM core domain maps to 1–228; sequence MQEIFLCSIS…NARLMVAGGR (228 aa). The [4Fe-4S] cluster site is built by C17, C21, and C24. [2Fe-2S] cluster contacts are provided by C61, C96, C154, and R221.

Belongs to the radical SAM superfamily. Biotin synthase family. As to quaternary structure, homodimer. [4Fe-4S] cluster serves as cofactor. The cofactor is [2Fe-2S] cluster.

It carries out the reaction (4R,5S)-dethiobiotin + (sulfur carrier)-SH + 2 reduced [2Fe-2S]-[ferredoxin] + 2 S-adenosyl-L-methionine = (sulfur carrier)-H + biotin + 2 5'-deoxyadenosine + 2 L-methionine + 2 oxidized [2Fe-2S]-[ferredoxin]. It participates in cofactor biosynthesis; biotin biosynthesis; biotin from 7,8-diaminononanoate: step 2/2. Functionally, catalyzes the conversion of dethiobiotin (DTB) to biotin by the insertion of a sulfur atom into dethiobiotin via a radical-based mechanism. This chain is Biotin synthase, found in Helicobacter pylori (strain J99 / ATCC 700824) (Campylobacter pylori J99).